The sequence spans 134 residues: Small ribosomal subunit protein uS8c (134 aa).

Belongs to the universal ribosomal protein uS8 family. Part of the 30S ribosomal subunit.

The protein localises to the plastid. It is found in the chloroplast. Its function is as follows. One of the primary rRNA binding proteins, it binds directly to 16S rRNA central domain where it helps coordinate assembly of the platform of the 30S subunit. The protein is Small ribosomal subunit protein uS8c (rps8) of Bigelowiella natans (Pedinomonas minutissima).